A 312-amino-acid chain; its full sequence is Acetyl-coenzyme A carboxylase carboxyl transferase subunit alpha (312 aa).

The 251-residue stretch at 36–286 (ELEKEIEKTF…KTYFLESVKA (251 aa)) folds into the CoA carboxyltransferase C-terminal domain.

This sequence belongs to the AccA family. Acetyl-CoA carboxylase is a heterohexamer composed of biotin carboxyl carrier protein (AccB), biotin carboxylase (AccC) and two subunits each of ACCase subunit alpha (AccA) and ACCase subunit beta (AccD).

The protein resides in the cytoplasm. It catalyses the reaction N(6)-carboxybiotinyl-L-lysyl-[protein] + acetyl-CoA = N(6)-biotinyl-L-lysyl-[protein] + malonyl-CoA. It functions in the pathway lipid metabolism; malonyl-CoA biosynthesis; malonyl-CoA from acetyl-CoA: step 1/1. Its function is as follows. Component of the acetyl coenzyme A carboxylase (ACC) complex. First, biotin carboxylase catalyzes the carboxylation of biotin on its carrier protein (BCCP) and then the CO(2) group is transferred by the carboxyltransferase to acetyl-CoA to form malonyl-CoA. In Sulfurovum sp. (strain NBC37-1), this protein is Acetyl-coenzyme A carboxylase carboxyl transferase subunit alpha.